An 82-amino-acid polypeptide reads, in one-letter code: Large ribosomal subunit protein bL31B (82 aa).

This sequence belongs to the bacterial ribosomal protein bL31 family. Type B subfamily. Part of the 50S ribosomal subunit.

This Amoebophilus asiaticus (strain 5a2) protein is Large ribosomal subunit protein bL31B.